Reading from the N-terminus, the 92-residue chain is FMRFamide-like neuropeptides 5 (92 aa).

The propeptide occupies 1-41 (MSSRSTTIAFLFIATLLVFQCVSAQSSAEDADYLEKYQRIA). Phenylalanine amide occurs at positions 51 and 61. Residues 64-82 (SRNTWEDGYASPSVNELYV) constitute a propeptide that is removed on maturation. Phenylalanine amide is present on phenylalanine 91.

The protein belongs to the FARP (FMRFamide related peptide) family. In terms of tissue distribution, each flp gene is expressed in a distinct set of neurons. Flp-5 is expressed in the ASE sensory neurons, the 14 and M4 cholinergic pharyngeal motoneurons, and the PVT and RMG neurons. It is weakly expressed in the PB and 12 neurons. Also expressed in pharyngeal muscle.

Its subcellular location is the secreted. Functionally, FMRFamides and FMRFamide-like peptides are neuropeptides. GAKFIRF-amide has an excitatory effect on dissected pharyngeal myogenic muscle system. The polypeptide is FMRFamide-like neuropeptides 5 (Caenorhabditis elegans).